We begin with the raw amino-acid sequence, 151 residues long: Phosphoribosyl-AMP cyclohydrolase (151 aa).

D94 contributes to the Mg(2+) binding site. Zn(2+) is bound at residue C95. Residues D96 and D98 each coordinate Mg(2+). Zn(2+) contacts are provided by C112 and C119.

Belongs to the PRA-CH family. Homodimer. Requires Mg(2+) as cofactor. Zn(2+) serves as cofactor.

It is found in the cytoplasm. It carries out the reaction 1-(5-phospho-beta-D-ribosyl)-5'-AMP + H2O = 1-(5-phospho-beta-D-ribosyl)-5-[(5-phospho-beta-D-ribosylamino)methylideneamino]imidazole-4-carboxamide. It participates in amino-acid biosynthesis; L-histidine biosynthesis; L-histidine from 5-phospho-alpha-D-ribose 1-diphosphate: step 3/9. In terms of biological role, catalyzes the hydrolysis of the adenine ring of phosphoribosyl-AMP. This chain is Phosphoribosyl-AMP cyclohydrolase, found in Rhodopseudomonas palustris (strain TIE-1).